The chain runs to 235 residues: Zein-alpha ZG99 (235 aa).

The N-terminal stretch at 1-21 (MAAKIFCLIMLLGLSASAATA) is a signal peptide.

Belongs to the zein family.

Its function is as follows. Zeins are major seed storage proteins. This chain is Zein-alpha ZG99, found in Zea mays (Maize).